A 95-amino-acid chain; its full sequence is Probable FAD-linked sulfhydryl oxidase OPG072 (95 aa).

The Intravirion portion of the chain corresponds to 1–8; it reads MNPKHWGR. An ERV/ALR sulfhydryl oxidase domain is found at 1–95; it reads MNPKHWGRAA…AIDVSKVKPL (95 aa). The chain crosses the membrane as a helical span at residues 9-25; that stretch reads AAWTIIFIVLSQAGLDG. Over 26-95 the chain is Virion surface; sequence NIEACKRKLY…AIDVSKVKPL (70 aa). A disulfide bridge connects residues Cys43 and Cys46.

The protein belongs to the orthopoxvirus OPG072 family. As to quaternary structure, interacts with OPG128; this interaction involves formation of a transient disulfide-bonded intermediate, allowing disulfide bond transfer. It depends on FAD as a cofactor.

Its subcellular location is the virion membrane. The protein resides in the host cytoplasm. The enzyme catalyses 2 R'C(R)SH + O2 = R'C(R)S-S(R)CR' + H2O2. In terms of biological role, FAD-dependent sulfhydryl oxidase that catalyzes disulfide bond formation. The complete pathway for formation of disulfide bonds in intracellular virion membrane proteins sequentially involves thiol-disulfide transfer between OPG072, OPG128 and OPG088. In Variola virus (isolate Human/India/Ind3/1967) (VARV), this protein is Probable FAD-linked sulfhydryl oxidase OPG072 (OPG072).